Reading from the N-terminus, the 514-residue chain is Protein p59 (514 aa).

Its subcellular location is the virion. This is Protein p59 from Lettuce infectious yellows virus (isolate United States/92) (LIYV).